Here is a 182-residue protein sequence, read N- to C-terminus: MQTEHVILLNAQGVPTGTLEKYAAHTADTLLHLAFSSWLFNAKGQLLVTRRALSKKAWPGVWTNSVCGHPQLGESNEDAVIRRCRYELGVEITPPESIYPDFRYRATDPSGIVENEVCPVFAARTTSALQINDDEVMDYQWCDLADVLHGIDATPWAFSPWMVMQAANSEARKLLSAFAQHN.

His25 and His32 together coordinate Mn(2+). Residues 30 to 164 (LLHLAFSSWL…PWAFSPWMVM (135 aa)) enclose the Nudix hydrolase domain. Cys67 is a catalytic residue. His69 contributes to the Mn(2+) binding site. Glu87 provides a ligand contact to Mg(2+). Positions 114 and 116 each coordinate Mn(2+). Glu116 is a catalytic residue.

The protein belongs to the IPP isomerase type 1 family. In terms of assembly, homodimer. It depends on Mg(2+) as a cofactor. Mn(2+) is required as a cofactor.

The protein resides in the cytoplasm. It carries out the reaction isopentenyl diphosphate = dimethylallyl diphosphate. It participates in isoprenoid biosynthesis; dimethylallyl diphosphate biosynthesis; dimethylallyl diphosphate from isopentenyl diphosphate: step 1/1. In terms of biological role, catalyzes the 1,3-allylic rearrangement of the homoallylic substrate isopentenyl (IPP) to its highly electrophilic allylic isomer, dimethylallyl diphosphate (DMAPP). This chain is Isopentenyl-diphosphate Delta-isomerase, found in Escherichia coli (strain ATCC 8739 / DSM 1576 / NBRC 3972 / NCIMB 8545 / WDCM 00012 / Crooks).